Here is a 691-residue protein sequence, read N- to C-terminus: DNA ligase (691 aa).

NAD(+)-binding positions include 41 to 45 (DAEYD), 90 to 91 (SL), and glutamate 130. Lysine 132 acts as the N6-AMP-lysine intermediate in catalysis. Residues arginine 153, glutamate 190, lysine 307, and lysine 331 each coordinate NAD(+). Zn(2+) is bound by residues cysteine 425, cysteine 428, cysteine 443, and cysteine 449. The BRCT domain occupies 610–691 (APQGVLAGKT…MHTLLEGHAR (82 aa)).

The protein belongs to the NAD-dependent DNA ligase family. LigA subfamily. It depends on Mg(2+) as a cofactor. The cofactor is Mn(2+).

The enzyme catalyses NAD(+) + (deoxyribonucleotide)n-3'-hydroxyl + 5'-phospho-(deoxyribonucleotide)m = (deoxyribonucleotide)n+m + AMP + beta-nicotinamide D-nucleotide.. Functionally, DNA ligase that catalyzes the formation of phosphodiester linkages between 5'-phosphoryl and 3'-hydroxyl groups in double-stranded DNA using NAD as a coenzyme and as the energy source for the reaction. It is essential for DNA replication and repair of damaged DNA. This Burkholderia pseudomallei (strain K96243) protein is DNA ligase.